The following is a 255-amino-acid chain: Acetylglutamate kinase (255 aa).

Residues 40–41 (GG), Arg62, and Asn153 each bind substrate.

This sequence belongs to the acetylglutamate kinase family. ArgB subfamily.

It is found in the cytoplasm. It catalyses the reaction N-acetyl-L-glutamate + ATP = N-acetyl-L-glutamyl 5-phosphate + ADP. It participates in amino-acid biosynthesis; L-arginine biosynthesis; N(2)-acetyl-L-ornithine from L-glutamate: step 2/4. Catalyzes the ATP-dependent phosphorylation of N-acetyl-L-glutamate. In Bacillus thuringiensis subsp. konkukian (strain 97-27), this protein is Acetylglutamate kinase.